The primary structure comprises 571 residues: Glutamine--tRNA ligase (571 aa).

The 'HIGH' region signature appears at 35-45 (PEPNGYLHIGH). Residues 36-38 (EPN) and 42-48 (HIGHAKS) contribute to the ATP site. Asp68 and Tyr213 together coordinate L-glutamine. ATP contacts are provided by residues Thr232, 262-263 (RL), and 270-272 (LSK). Residues 269-273 (ILSKR) carry the 'KMSKS' region motif.

The protein belongs to the class-I aminoacyl-tRNA synthetase family. In terms of assembly, monomer.

It is found in the cytoplasm. The enzyme catalyses tRNA(Gln) + L-glutamine + ATP = L-glutaminyl-tRNA(Gln) + AMP + diphosphate. The polypeptide is Glutamine--tRNA ligase (Buchnera aphidicola subsp. Acyrthosiphon pisum (strain Tuc7)).